The chain runs to 438 residues: Serine hydroxymethyltransferase 1 (438 aa).

Residues Leu130 and 134–136 (GHL) contribute to the (6S)-5,6,7,8-tetrahydrofolate site. At Lys239 the chain carries N6-(pyridoxal phosphate)lysine.

The protein belongs to the SHMT family. In terms of assembly, homodimer. Requires pyridoxal 5'-phosphate as cofactor.

It localises to the cytoplasm. It carries out the reaction (6R)-5,10-methylene-5,6,7,8-tetrahydrofolate + glycine + H2O = (6S)-5,6,7,8-tetrahydrofolate + L-serine. The protein operates within one-carbon metabolism; tetrahydrofolate interconversion. It participates in amino-acid biosynthesis; glycine biosynthesis; glycine from L-serine: step 1/1. In terms of biological role, catalyzes the reversible interconversion of serine and glycine with tetrahydrofolate (THF) serving as the one-carbon carrier. This reaction serves as the major source of one-carbon groups required for the biosynthesis of purines, thymidylate, methionine, and other important biomolecules. Also exhibits THF-independent aldolase activity toward beta-hydroxyamino acids, producing glycine and aldehydes, via a retro-aldol mechanism. Thus, is able to catalyze the cleavage of L-allo-threonine. The protein is Serine hydroxymethyltransferase 1 of Mycobacterium tuberculosis (strain ATCC 25618 / H37Rv).